A 282-amino-acid chain; its full sequence is Pseudokinase OPG198 (282 aa).

Met1 and Lys30 together coordinate ATP. A Protein kinase domain is found at Met1–Asp282.

This sequence belongs to the protein kinase superfamily. Ser/Thr protein kinase family. Poxviruses subfamily. As to quaternary structure, interacts with B1/VPK1. Interacts with host VRK1. Interacts with host VRK2.

It localises to the host nucleus. Both catalytically active kinases B1/VPK1 and host VRK2 repress B12 inhibitory activity in a B1/VPK1 deletion mutant strain. Its function is as follows. Pseudokinase that plays a role in viral DNA replication repression by activating the antiviral protein BANF1 and inhibiting the activity of host VRK1, a cellular modulator of BANF1. This Cynomys gunnisoni (Gunnison's prairie dog) protein is Pseudokinase OPG198 (OPG198).